A 143-amino-acid polypeptide reads, in one-letter code: Small ribosomal subunit protein bS6 (143 aa).

A disordered region spans residues 95–143 (GPDTEQSFIMKSKDDKGDKPERRRRDDDENGDVGVSNDSDNDGGNAEAA). The segment covering 105–121 (KSKDDKGDKPERRRRDD) has biased composition (basic and acidic residues).

This sequence belongs to the bacterial ribosomal protein bS6 family.

In terms of biological role, binds together with bS18 to 16S ribosomal RNA. The protein is Small ribosomal subunit protein bS6 of Xylella fastidiosa (strain M23).